Consider the following 1145-residue polypeptide: Error-prone DNA polymerase (1145 aa).

Belongs to the DNA polymerase type-C family. DnaE2 subfamily.

It localises to the cytoplasm. It carries out the reaction DNA(n) + a 2'-deoxyribonucleoside 5'-triphosphate = DNA(n+1) + diphosphate. DNA polymerase involved in damage-induced mutagenesis and translesion synthesis (TLS). It is not the major replicative DNA polymerase. This Rhodopirellula baltica (strain DSM 10527 / NCIMB 13988 / SH1) protein is Error-prone DNA polymerase.